The chain runs to 320 residues: Probable NAD(P)H-dependent D-xylose reductase xyl1 (320 aa).

Tyrosine 50 acts as the Proton donor in catalysis. Histidine 112 lines the substrate pocket. Residues serine 167 to asparagine 168, serine 216 to glutamate 225, and lysine 272 to asparagine 282 contribute to the NAD(+) site.

This sequence belongs to the aldo/keto reductase family.

It carries out the reaction xylitol + NAD(+) = D-xylose + NADH + H(+). The enzyme catalyses xylitol + NADP(+) = D-xylose + NADPH + H(+). The protein operates within carbohydrate metabolism; D-xylose degradation. Catalyzes the initial reaction in the xylose utilization pathway by reducing D-xylose into xylitol. Xylose is a major component of hemicelluloses such as xylan. Most fungi utilize D-xylose via three enzymatic reactions, xylose reductase (XR), xylitol dehydrogenase (XDH), and xylulokinase, to form xylulose 5-phosphate, which enters pentose phosphate pathway. The polypeptide is Probable NAD(P)H-dependent D-xylose reductase xyl1 (xyl1) (Aspergillus terreus (strain NIH 2624 / FGSC A1156)).